Here is a 435-residue protein sequence, read N- to C-terminus: tRNA modification GTPase MnmE (435 aa).

(6S)-5-formyl-5,6,7,8-tetrahydrofolate contacts are provided by arginine 24, glutamate 82, and lysine 122. The 142-residue stretch at 219–360 (GFIIAIAGPP…LIAEMERRLG (142 aa)) folds into the TrmE-type G domain. Asparagine 229 serves as a coordination point for K(+). GTP is bound by residues 229 to 234 (NAGKST), 248 to 254 (SPVPGTT), and 273 to 276 (DTAG). Serine 233 contributes to the Mg(2+) binding site. Residues serine 248, valine 250, and threonine 253 each contribute to the K(+) site. Position 254 (threonine 254) interacts with Mg(2+). (6S)-5-formyl-5,6,7,8-tetrahydrofolate is bound at residue lysine 435.

This sequence belongs to the TRAFAC class TrmE-Era-EngA-EngB-Septin-like GTPase superfamily. TrmE GTPase family. As to quaternary structure, homodimer. Heterotetramer of two MnmE and two MnmG subunits. Requires K(+) as cofactor.

The protein localises to the cytoplasm. Its function is as follows. Exhibits a very high intrinsic GTPase hydrolysis rate. Involved in the addition of a carboxymethylaminomethyl (cmnm) group at the wobble position (U34) of certain tRNAs, forming tRNA-cmnm(5)s(2)U34. The protein is tRNA modification GTPase MnmE of Azorhizobium caulinodans (strain ATCC 43989 / DSM 5975 / JCM 20966 / LMG 6465 / NBRC 14845 / NCIMB 13405 / ORS 571).